The following is a 413-amino-acid chain: Pyruvate dehydrogenase complex subunit homolog DDB_G0271564, mitochondrial (413 aa).

Residues 1 to 19 (MNRILKQVSNTKGKGIRFY) constitute a mitochondrion transit peptide. The Peripheral subunit-binding (PSBD) domain maps to 29 to 67 (YMFPSVRRLLVEYGINSSKEVTATGPQNRLLKGDVLAYI).

Belongs to the 2-oxoacid dehydrogenase family.

It localises to the mitochondrion. In terms of biological role, the pyruvate dehydrogenase complex catalyzes the overall conversion of pyruvate to acetyl-CoA and CO(2). It contains multiple copies of three enzymatic components: pyruvate dehydrogenase (E1), dihydrolipoamide acetyltransferase (E2) and lipoamide dehydrogenase (E3). This is Pyruvate dehydrogenase complex subunit homolog DDB_G0271564, mitochondrial (pdhX) from Dictyostelium discoideum (Social amoeba).